The following is a 604-amino-acid chain: MAESKGSTSKEGFGDWCILEAECSDVENDLEKLFDEDTDSDISDLLDDNDLEQGNSRELFHQQECQESEEHLQKLKRKYLSPKAVAQLSPRFESISLSPQQKSKRRLFAEQDSGLELTLTNEAEDVSSEVEVPALDSQPVAGEQSGDIDIHFTALLRANNNRAILMAKFKEAFGVGFYDLTRQFKSYKTCCNAWVISVYAVHDDLLESSKQLLQQHCDYVWIRQTAAMSLFLLCFKVGKNRGTVHKLMMSMLNVHEKQILSEPPKLRNTAAALFWYKGCMGSGGFTYGPYPDWIAQQTILGHQNAEASSFDLSEMIQWAFDNNHMDESDIAYQYAKLAPENSNAVAWLAHNNQARFVRECAAMVRFYKKGQMKEMSMSEWIYARIHEVDGEGHWSTIAKFLRYQQVNFIMFLAALKDLLHAVPKRNCILIYGPPNTGKSAFTMSLIRVLKGRVISFVNSKSQFWLQPLSECKIALLDDVTDPCWIYMDTYLRNGLDGHVVSLDCKHKAPIQTKFPALLLTSNINVHNEVNYRYLHSRIQGFEFPNPFPMKADNTPQFELTDQSWKSFFTRLWQQLELSDHEEEGENGESQRTFQCSTRSANEHL.

The Nuclear localization signal signature appears at 76-78 (KRK). A phosphoserine; by host mark is found at serine 81 and serine 89. The DNA-binding region stretch occupies residues 144 to 307 (QSGDIDIHFT…TILGHQNAEA (164 aa)). One can recognise an SF3 helicase domain in the interval 406–556 (VNFIMFLAAL…FPMKADNTPQ (151 aa)). Residue 432–439 (GPPNTGKS) coordinates ATP. Lysine 513 is covalently cross-linked (Glycyl lysine isopeptide (Lys-Gly) (interchain with G-Cter in SUMO)). The interval 579–604 (DHEEEGENGESQRTFQCSTRSANEHL) is disordered. The span at 587-604 (GESQRTFQCSTRSANEHL) shows a compositional bias: polar residues.

Belongs to the papillomaviridae E1 protein family. Can form hexamers. Interacts with E2 protein; this interaction increases E1 DNA binding specificity. Interacts with host DNA polymerase subunit POLA2. Interacts with host single stranded DNA-binding protein RPA1. Interacts with host TOP1; this interaction stimulates the enzymatic activity of TOP1. Phosphorylated. In terms of processing, sumoylated.

It localises to the host nucleus. It carries out the reaction Couples ATP hydrolysis with the unwinding of duplex DNA by translocating in the 3'-5' direction.. The enzyme catalyses ATP + H2O = ADP + phosphate + H(+). Its function is as follows. ATP-dependent DNA 3'-5' helicase required for initiation of viral DNA replication. It forms a complex with the viral E2 protein. The E1-E2 complex binds to the replication origin which contains binding sites for both proteins. During the initial step, a dimer of E1 interacts with a dimer of protein E2 leading to a complex that binds the viral origin of replication with high specificity. Then, a second dimer of E1 displaces the E2 dimer in an ATP-dependent manner to form the E1 tetramer. Following this, two E1 monomers are added to each half of the site, which results in the formation of two E1 trimers on the viral ori. Subsequently, two hexamers will be created. The double hexamer acts as a bi-directional helicase machinery and unwinds the viral DNA and then recruits the host DNA polymerase to start replication. The sequence is that of Replication protein E1 from Homo sapiens (Human).